Here is a 125-residue protein sequence, read N- to C-terminus: UPF0251 protein DSY3441 (125 aa).

It belongs to the UPF0251 family.

The protein is UPF0251 protein DSY3441 of Desulfitobacterium hafniense (strain Y51).